Reading from the N-terminus, the 277-residue chain is Probable cyclic nucleotide phosphodiesterase MCR_0369 (277 aa).

Fe cation-binding residues include aspartate 17, histidine 19, aspartate 53, asparagine 83, histidine 165, histidine 204, and histidine 206. AMP-binding positions include histidine 19, aspartate 53, and 83–84 (NH). Histidine 206 serves as a coordination point for AMP.

The protein belongs to the cyclic nucleotide phosphodiesterase class-III family. Fe(2+) serves as cofactor.

The polypeptide is Probable cyclic nucleotide phosphodiesterase MCR_0369 (Moraxella catarrhalis (strain BBH18)).